The chain runs to 841 residues: Formin-like protein 10 (841 aa).

Positions 1-25 (MDGLCYVIFIIFSLLSCAFSPLSYA) are cleaved as a signal peptide. Residues 102–122 (LIPAISAVLAAATLIALAFFF) traverse the membrane as a helical segment. Disordered regions lie at residues 137-166 (SKSLASDISQSQQQTLPCPPPRNNNTQNKL), 254-297 (ISSH…RTVR), and 403-512 (KSSW…SKQR). Residues 139–152 (SLASDISQSQQQTL) show a composition bias toward polar residues. Low complexity predominate over residues 254–278 (ISSHSDSPAMSPSAAMSPPMNSTAP). Positions 279–293 (HWSTNQNTHSPSSPE) are enriched in polar residues. The segment covering 426-444 (LPPPQRPPPAMPEPPPLVP) has biased composition (pro residues). Residues 469–841 (EGTTDRPKPK…KKMEVTSSLA (373 aa)) enclose the FH2 domain. Over residues 502–512 (YNSSNANSKQR) the composition is skewed to polar residues.

It belongs to the formin-like family. Class-I subfamily.

The protein resides in the membrane. Its function is as follows. Might be involved in the organization and polarity of the actin cytoskeleton. The polypeptide is Formin-like protein 10 (FH10) (Arabidopsis thaliana (Mouse-ear cress)).